The following is an 86-amino-acid chain: Cell division topological specificity factor (86 aa).

The protein belongs to the MinE family.

Its function is as follows. Prevents the cell division inhibition by proteins MinC and MinD at internal division sites while permitting inhibition at polar sites. This ensures cell division at the proper site by restricting the formation of a division septum at the midpoint of the long axis of the cell. This chain is Cell division topological specificity factor, found in Aliivibrio salmonicida (strain LFI1238) (Vibrio salmonicida (strain LFI1238)).